A 207-amino-acid chain; its full sequence is Ribosomal RNA small subunit methyltransferase G (207 aa).

S-adenosyl-L-methionine-binding positions include G76, Q81, V127–E128, and R141.

The protein belongs to the methyltransferase superfamily. RNA methyltransferase RsmG family.

It is found in the cytoplasm. The enzyme catalyses guanosine(527) in 16S rRNA + S-adenosyl-L-methionine = N(7)-methylguanosine(527) in 16S rRNA + S-adenosyl-L-homocysteine. Functionally, specifically methylates the N7 position of guanine in position 527 of 16S rRNA. The sequence is that of Ribosomal RNA small subunit methyltransferase G from Neisseria meningitidis serogroup A / serotype 4A (strain DSM 15465 / Z2491).